The sequence spans 159 residues: Ecotin (159 aa).

A signal peptide spans 1–22 (MRPTPMTAILALSLAAAAPAMA). C68 and C105 are disulfide-bonded.

It belongs to the protease inhibitor I11 (ecotin) family. In terms of assembly, homodimer.

The protein localises to the periplasm. Its function is as follows. General inhibitor of family S1 serine proteases. This chain is Ecotin, found in Pseudomonas putida (strain ATCC 700007 / DSM 6899 / JCM 31910 / BCRC 17059 / LMG 24140 / F1).